The sequence spans 530 residues: Membrane-associated transporter protein (530 aa).

The Cytoplasmic portion of the chain corresponds to 1 to 46 (MGSNSGQAGRHIYKSLADDGPFDSVEPPKRPTSRLIMHSMAMFGRE). The chain crosses the membrane as a helical span at residues 47-67 (FCYAVEAAYVTPVLLSVGLPS). Position 68 (S68) is a topological domain, extracellular. The helical transmembrane segment at 69 to 89 (LYSIVWFLSPILGFLLQPVVG) threads the bilayer. Residues 90-110 (SASDHCRSRWGRRRPYILTLG) are Cytoplasmic-facing. Residues 111–131 (VMMLVGMALYLNGATVVAALI) traverse the membrane as a helical segment. Over 132 to 138 (ANPRRKL) the chain is Extracellular. Residues 139–159 (VWAISVTMIGVVLFDFAADFI) form a helical membrane-spanning segment. The Cytoplasmic segment spans residues 160-184 (DGPIKAYLFDVCSHQDKEKGLHYHA). A helical membrane pass occupies residues 185 to 205 (LFTGFGGALGYLLGAIDWAHL). At 206-216 (ELGRLLGTEFQ) the chain is on the extracellular side. Residues 217–237 (VMFFFSALVLTLCFTVHLCSI) form a helical membrane-spanning segment. Residues 238 to 318 (SEAPLTEVAK…ALVNMPPHYR (81 aa)) are Cytoplasmic-facing. A helical transmembrane segment spans residues 319-339 (YLCISHLIGWTAFLSNMLFFT). Residues 340-366 (DFMGQIVYRGDPYSAHNSTEFLIYERG) lie on the Extracellular side of the membrane. A glycan (N-linked (GlcNAc...) asparagine) is linked at N356. The helical transmembrane segment at 367–387 (VEVGCWGLCINSVFSSLYSYF) threads the bilayer. Topologically, residues 388–398 (QKVLVSYIGLK) are cytoplasmic. A helical transmembrane segment spans residues 399–419 (GLYFTGYLLFGLGTGFIGLFP). Residues 420-425 (NVYSTL) are Extracellular-facing. The chain crosses the membrane as a helical span at residues 426–446 (VLCSLFGVMSSTLYTVPFNLI). Residues 447–477 (TEYHREEEKERQQAPGGDPDNSVRGKGMDCA) lie on the Cytoplasmic side of the membrane. A helical transmembrane segment spans residues 478–498 (TLTCMVQLAQILVGGGLGFLV). Residues 499-504 (NTAGTV) are Extracellular-facing. Residues 505-525 (VVVVITASAVALIGCCFVALF) traverse the membrane as a helical segment. Over 526-530 (VRYVD) the chain is Cytoplasmic.

This sequence belongs to the glycoside-pentoside-hexuronide (GPH) cation symporter transporter (TC 2.A.2) family. Interacts with TYRP1. In terms of tissue distribution, expressed in mature melanocytes.

The protein resides in the melanosome membrane. It carries out the reaction sucrose(out) + H(+)(out) = sucrose(in) + H(+)(in). The enzyme catalyses D-glucose(out) + H(+)(out) = D-glucose(in) + H(+)(in). Proton-associated glucose and sucrose transporter. May be able to transport also fructose. Expressed at a late melanosome maturation stage where functions as proton/glucose exporter which increase lumenal pH by decreasing glycolysis. Regulates melanogenesis by maintaining melanosome neutralization that is initially initiated by transient OCA2 and required for a proper function of the tyrosinase TYR. The polypeptide is Membrane-associated transporter protein (Homo sapiens (Human)).